The primary structure comprises 212 residues: 2-C-methyl-D-erythritol 4-phosphate cytidylyltransferase (212 aa).

Belongs to the IspD/TarI cytidylyltransferase family. IspD subfamily.

It catalyses the reaction 2-C-methyl-D-erythritol 4-phosphate + CTP + H(+) = 4-CDP-2-C-methyl-D-erythritol + diphosphate. Its pathway is isoprenoid biosynthesis; isopentenyl diphosphate biosynthesis via DXP pathway; isopentenyl diphosphate from 1-deoxy-D-xylulose 5-phosphate: step 2/6. Functionally, catalyzes the formation of 4-diphosphocytidyl-2-C-methyl-D-erythritol from CTP and 2-C-methyl-D-erythritol 4-phosphate (MEP). This chain is 2-C-methyl-D-erythritol 4-phosphate cytidylyltransferase, found in Chlamydia caviae (strain ATCC VR-813 / DSM 19441 / 03DC25 / GPIC) (Chlamydophila caviae).